A 704-amino-acid polypeptide reads, in one-letter code: DNA ligase (704 aa).

Residues 43–47 (DADYD), 92–93 (SL), and Glu-124 contribute to the NAD(+) site. Residue Lys-126 is the N6-AMP-lysine intermediate of the active site. Arg-147, Glu-182, Lys-298, and Lys-322 together coordinate NAD(+). Residues Cys-427, Cys-430, Cys-445, and Cys-451 each contribute to the Zn(2+) site. In terms of domain architecture, BRCT spans 625 to 704 (PVESPIAGKI…DAWLRLIGDA (80 aa)).

This sequence belongs to the NAD-dependent DNA ligase family. LigA subfamily. It depends on Mg(2+) as a cofactor. Mn(2+) serves as cofactor.

The enzyme catalyses NAD(+) + (deoxyribonucleotide)n-3'-hydroxyl + 5'-phospho-(deoxyribonucleotide)m = (deoxyribonucleotide)n+m + AMP + beta-nicotinamide D-nucleotide.. In terms of biological role, DNA ligase that catalyzes the formation of phosphodiester linkages between 5'-phosphoryl and 3'-hydroxyl groups in double-stranded DNA using NAD as a coenzyme and as the energy source for the reaction. It is essential for DNA replication and repair of damaged DNA. The chain is DNA ligase from Cereibacter sphaeroides (strain ATCC 17025 / ATH 2.4.3) (Rhodobacter sphaeroides).